The following is a 1004-amino-acid chain: ABC transporter G family member 25 (1004 aa).

The signal sequence occupies residues 1-27 (MAASQLLAAAVAAAVFLAALLVPPARC). The chain crosses the membrane as a helical span at residues 271–291 (ATALFGGILIVILSVVLLLVY). A disordered region spans residues 343–373 (SDQLAASSNEARHATEGNGKRSKNRKKLAHA). The segment covering 352-361 (EARHATEGNG) has biased composition (basic and acidic residues). Residues 362 to 372 (KRSKNRKKLAH) show a composition bias toward basic residues. One can recognise an ABC transporter domain in the interval 419-659 (VVFKGLTLSI…FSSLGIKVPE (241 aa)). 451 to 458 (GPSGAGKT) provides a ligand contact to ATP. 6 helical membrane-spanning segments follow: residues 776 to 796 (ATLQAVDYLILCIAGICIGTI), 804 to 824 (FGVASYGYTIIAVSLLCQLAA), 886 to 906 (LVFLALVYCVTGIGYTFAIWF), 907 to 927 (ELGLAQLCSALIPVVLVLVGT), 943 to 963 (WALEALIIAGAKKYSGVWLIT), and 978 to 998 (FVLCIVIVMLMGVLFRFIALL).

Belongs to the ABC transporter superfamily. ABCG family. Eye pigment precursor importer (TC 3.A.1.204) subfamily.

It localises to the membrane. This Oryza sativa subsp. japonica (Rice) protein is ABC transporter G family member 25.